A 185-amino-acid polypeptide reads, in one-letter code: CASP-like protein 5A1 (185 aa).

The Cytoplasmic portion of the chain corresponds to methionine 1 to threonine 45. The chain crosses the membrane as a helical span at residues leucine 46–methionine 66. At leucine 67 to alanine 76 the chain is on the extracellular side. The chain crosses the membrane as a helical span at residues phenylalanine 77 to isoleucine 97. The Cytoplasmic segment spans residues aspartate 98–aspartate 121. Residues glycine 122–isoleucine 142 traverse the membrane as a helical segment. The Extracellular portion of the chain corresponds to glycine 143–alanine 160. The helical transmembrane segment at isoleucine 161–leucine 181 threads the bilayer. Residues leucine 182–leucine 185 are Cytoplasmic-facing.

It belongs to the Casparian strip membrane proteins (CASP) family. In terms of assembly, homodimer and heterodimers.

It is found in the cell membrane. The polypeptide is CASP-like protein 5A1 (Picea sitchensis (Sitka spruce)).